The following is a 135-amino-acid chain: Flagellar assembly factor FliW 1 (135 aa).

This sequence belongs to the FliW family. As to quaternary structure, interacts with translational regulator CsrA and flagellin(s).

The protein resides in the cytoplasm. Functionally, acts as an anti-CsrA protein, binds CsrA and prevents it from repressing translation of its target genes, one of which is flagellin. Binds to flagellin and participates in the assembly of the flagellum. This Helicobacter pylori (strain ATCC 700392 / 26695) (Campylobacter pylori) protein is Flagellar assembly factor FliW 1.